A 350-amino-acid polypeptide reads, in one-letter code: Biotin synthase (350 aa).

Residues 41 to 268 (NEVQISRLLS…KSRVRLSAGR (228 aa)) enclose the Radical SAM core domain. [4Fe-4S] cluster is bound by residues C56, C60, and C63. Residues C100, C131, C191, and R263 each coordinate [2Fe-2S] cluster.

Belongs to the radical SAM superfamily. Biotin synthase family. In terms of assembly, homodimer. [4Fe-4S] cluster serves as cofactor. Requires [2Fe-2S] cluster as cofactor.

The enzyme catalyses (4R,5S)-dethiobiotin + (sulfur carrier)-SH + 2 reduced [2Fe-2S]-[ferredoxin] + 2 S-adenosyl-L-methionine = (sulfur carrier)-H + biotin + 2 5'-deoxyadenosine + 2 L-methionine + 2 oxidized [2Fe-2S]-[ferredoxin]. It participates in cofactor biosynthesis; biotin biosynthesis; biotin from 7,8-diaminononanoate: step 2/2. Its function is as follows. Catalyzes the conversion of dethiobiotin (DTB) to biotin by the insertion of a sulfur atom into dethiobiotin via a radical-based mechanism. This Shewanella halifaxensis (strain HAW-EB4) protein is Biotin synthase.